A 95-amino-acid chain; its full sequence is Aspartyl/glutamyl-tRNA(Asn/Gln) amidotransferase subunit C (95 aa).

This sequence belongs to the GatC family. Heterotrimer of A, B and C subunits.

The catalysed reaction is L-glutamyl-tRNA(Gln) + L-glutamine + ATP + H2O = L-glutaminyl-tRNA(Gln) + L-glutamate + ADP + phosphate + H(+). It carries out the reaction L-aspartyl-tRNA(Asn) + L-glutamine + ATP + H2O = L-asparaginyl-tRNA(Asn) + L-glutamate + ADP + phosphate + 2 H(+). Allows the formation of correctly charged Asn-tRNA(Asn) or Gln-tRNA(Gln) through the transamidation of misacylated Asp-tRNA(Asn) or Glu-tRNA(Gln) in organisms which lack either or both of asparaginyl-tRNA or glutaminyl-tRNA synthetases. The reaction takes place in the presence of glutamine and ATP through an activated phospho-Asp-tRNA(Asn) or phospho-Glu-tRNA(Gln). This Cereibacter sphaeroides (strain ATCC 17025 / ATH 2.4.3) (Rhodobacter sphaeroides) protein is Aspartyl/glutamyl-tRNA(Asn/Gln) amidotransferase subunit C.